Consider the following 588-residue polypeptide: Adenine deaminase (588 aa).

It belongs to the metallo-dependent hydrolases superfamily. Adenine deaminase family. In terms of assembly, homodimer. It depends on Mn(2+) as a cofactor.

The catalysed reaction is adenine + H2O + H(+) = hypoxanthine + NH4(+). This chain is Adenine deaminase, found in Escherichia coli (strain SE11).